Reading from the N-terminus, the 730-residue chain is MSKNSEFINLSFLLDHEKEMILGVLKRDEYLKKVEDKRIRKLKNELLEAKRRSGKTQQEASRVCVHCHRNLGLIFDRGDPCQACSLRVCRECRVAGPNGSWKCTVCDKIAQLRIITGEWFFEEKAKRFKQVNVLGTDVVRQSILRRSPGAEEVQSQEQTRQDAEKSDTSPVAGKKASHDGPKRKGFLLSKFRSATRGEIITPKTDTGRSYSLDLDGQHFRSLKSPPGSDRGSTGSSDLNDQEPGPRTPKSSRSNGVTPGTQSSPAPSTRTVTSVISREYGFENSMDLAAIEGTSQELTKSHRRNTSGTPSIAVSGTSLSSDQSRSELDLSESFTEDSEDTVSIRSKSVPGALDKDSLEETEESIDALVSSQLSTNTHRLASGLSTTSLNSMMSVYSETGDYGNVKVSGEILLHISYCYKTGGLYIFVKNCRNLAIGDEKKQRTDAYVKSYLLPDKSRNNKRKTKIRTGTNPEFNETLKYTISHTQLETRTLQLSVWHYDRFGRNSFLGEVEIPFDSWNFENPTDEWFVLQPKVEFAPDIGLQYKGELTVVLRYIPPEENLMLPPEQLQGNKTFKKGKKKESPVISGGILEVFIKEAKNLTAVKSGGTSDSFVKGYLLPDDSKATKHKTLVIKKSVNPQWNHTFMFSGIHPQDIKNVCLELTIWDKEAFSSNIFLGGVRLNSGSGVSHGKNVDWMDSQGEEQRLWQKMANNPGTPFEGVLMLRSSMGKCRL.

The 117-residue stretch at 7–123 (FINLSFLLDH…IITGEWFFEE (117 aa)) folds into the RabBD domain. Residues 64–106 (CVHCHRNLGLIFDRGDPCQACSLRVCRECRVAGPNGSWKCTVC) form an FYVE-type zinc finger. Position 147 is a phosphoserine (Ser147). Disordered regions lie at residues 147–188 (SPGA…GFLL), 217–271 (QHFR…TRTV), and 294–355 (SQEL…LDKD). Polar residues-rich tracts occupy residues 248-271 (PKSS…TRTV) and 305-322 (TSGT…SSDQ). C2 domains lie at 406 to 527 (VSGE…DEWF) and 563 to 694 (PPEQ…VDWM).

In terms of assembly, binds RAB27A that has been activated by GTP-binding, and possibly also RAB3A and RAB6A. Highly expressed in placenta and liver.

It is found in the membrane. Functionally, may act as Rab effector protein and play a role in vesicle trafficking. Binds phospholipids. This chain is Synaptotagmin-like protein 5 (SYTL5), found in Homo sapiens (Human).